The following is a 373-amino-acid chain: Aminomethyltransferase (373 aa).

Belongs to the GcvT family. In terms of assembly, the glycine cleavage system is composed of four proteins: P, T, L and H.

It catalyses the reaction N(6)-[(R)-S(8)-aminomethyldihydrolipoyl]-L-lysyl-[protein] + (6S)-5,6,7,8-tetrahydrofolate = N(6)-[(R)-dihydrolipoyl]-L-lysyl-[protein] + (6R)-5,10-methylene-5,6,7,8-tetrahydrofolate + NH4(+). Functionally, the glycine cleavage system catalyzes the degradation of glycine. This Prochlorococcus marinus (strain SARG / CCMP1375 / SS120) protein is Aminomethyltransferase.